A 201-amino-acid chain; its full sequence is Lipopolysaccharide core heptose(II)-phosphate phosphatase (201 aa).

The N-terminal stretch at 1-35 (MLAFTLRFIKNKRYLATLAGALVIIAGLTSQHAWS) is a signal peptide.

Belongs to the phosphoglycerate mutase family. Ais subfamily.

It localises to the periplasm. It functions in the pathway bacterial outer membrane biogenesis; lipopolysaccharide metabolism. In terms of biological role, catalyzes the dephosphorylation of heptose(II) of the outer membrane lipopolysaccharide core. This chain is Lipopolysaccharide core heptose(II)-phosphate phosphatase, found in Salmonella choleraesuis (strain SC-B67).